Here is a 119-residue protein sequence, read N- to C-terminus: uncharacterized protein (119 aa).

The protein resides in the mitochondrion. This is an uncharacterized protein from Arabidopsis thaliana (Mouse-ear cress).